A 119-amino-acid polypeptide reads, in one-letter code: Large ribosomal subunit protein uL22 (119 aa).

This sequence belongs to the universal ribosomal protein uL22 family. Part of the 50S ribosomal subunit.

Functionally, this protein binds specifically to 23S rRNA; its binding is stimulated by other ribosomal proteins, e.g. L4, L17, and L20. It is important during the early stages of 50S assembly. It makes multiple contacts with different domains of the 23S rRNA in the assembled 50S subunit and ribosome. In terms of biological role, the globular domain of the protein is located near the polypeptide exit tunnel on the outside of the subunit, while an extended beta-hairpin is found that lines the wall of the exit tunnel in the center of the 70S ribosome. The sequence is that of Large ribosomal subunit protein uL22 from Pelodictyon phaeoclathratiforme (strain DSM 5477 / BU-1).